A 341-amino-acid polypeptide reads, in one-letter code: S-adenosylmethionine:tRNA ribosyltransferase-isomerase (341 aa).

The protein belongs to the QueA family. As to quaternary structure, monomer.

Its subcellular location is the cytoplasm. It catalyses the reaction 7-aminomethyl-7-carbaguanosine(34) in tRNA + S-adenosyl-L-methionine = epoxyqueuosine(34) in tRNA + adenine + L-methionine + 2 H(+). It functions in the pathway tRNA modification; tRNA-queuosine biosynthesis. In terms of biological role, transfers and isomerizes the ribose moiety from AdoMet to the 7-aminomethyl group of 7-deazaguanine (preQ1-tRNA) to give epoxyqueuosine (oQ-tRNA). This Staphylococcus epidermidis (strain ATCC 35984 / DSM 28319 / BCRC 17069 / CCUG 31568 / BM 3577 / RP62A) protein is S-adenosylmethionine:tRNA ribosyltransferase-isomerase.